The chain runs to 62 residues: Photosystem II reaction center protein Z (62 aa).

Helical transmembrane passes span 8 to 28 (SVFA…VVLA) and 41 to 61 (FSGA…NSFI).

Belongs to the PsbZ family. As to quaternary structure, PSII is composed of 1 copy each of membrane proteins PsbA, PsbB, PsbC, PsbD, PsbE, PsbF, PsbH, PsbI, PsbJ, PsbK, PsbL, PsbM, PsbT, PsbY, PsbZ, Psb30/Ycf12, at least 3 peripheral proteins of the oxygen-evolving complex and a large number of cofactors. It forms dimeric complexes.

The protein resides in the plastid. It is found in the chloroplast thylakoid membrane. May control the interaction of photosystem II (PSII) cores with the light-harvesting antenna, regulates electron flow through the 2 photosystem reaction centers. PSII is a light-driven water plastoquinone oxidoreductase, using light energy to abstract electrons from H(2)O, generating a proton gradient subsequently used for ATP formation. The sequence is that of Photosystem II reaction center protein Z from Staurastrum punctulatum (Green alga).